The chain runs to 107 residues: uncharacterized protein (107 aa).

Residues 37–59 (MVFSFLTVMPGDFIKCLFLRFFV) form a helical membrane-spanning segment.

It localises to the membrane. This is an uncharacterized protein from Saccharomyces cerevisiae (strain ATCC 204508 / S288c) (Baker's yeast).